The following is a 520-amino-acid chain: Amino-acid permease BAT1 homolog (520 aa).

12 helical membrane-spanning segments follow: residues 39-59, 74-94, 118-138, 168-188, 193-213, 236-256, 278-298, 334-354, 387-407, 410-430, 454-474, and 487-507; these read VLSN…ITTL, FGWF…AEIC, FASW…TTSV, VVIA…SLPI, FFGQ…MIAV, AGIH…QYTL, IGII…ILGI, SGIG…FCGM, VPIN…LPSL, LVAF…AYAL, GVAV…LFSL, and YTPV…LLSA.

It belongs to the amino acid-polyamine-organocation (APC) superfamily. Amino acid/choline transporter (ACT) (TC 2.A.3.4) family.

It is found in the membrane. Its function is as follows. May be involved in the transport of amino acids. The polypeptide is Amino-acid permease BAT1 homolog (BAT1) (Oryza sativa subsp. japonica (Rice)).